The sequence spans 264 residues: MPPVPNDKPFTLAGRTYQSRLLVGTGKYKDLEETRAAIEASGAEIVTVAVRRTNIGQNPGEPNLLDVISPERYTILPNTAGCFTAEDAVRTCRLARELLDGHKLVKLEVLADQKTLFPNVIETLKAAEVLIKDGFDVMVYTSDDPIIARQLAEMGCIAVMPLAGLIGTGLGICNPYNLRIILEEATVPVLVDAGVGTASDATIAMELGCEAVLMNSAIAHAQNPVLMAEAMKYAIEAGRLAYLAGRMPKKLYASASSPLDGLIR.

Lys-106 functions as the Schiff-base intermediate with DXP in the catalytic mechanism. Residues Gly-167, 193-194, and 215-216 contribute to the 1-deoxy-D-xylulose 5-phosphate site; these read AG and NS.

The protein belongs to the ThiG family. As to quaternary structure, homotetramer. Forms heterodimers with either ThiH or ThiS.

Its subcellular location is the cytoplasm. The enzyme catalyses [ThiS sulfur-carrier protein]-C-terminal-Gly-aminoethanethioate + 2-iminoacetate + 1-deoxy-D-xylulose 5-phosphate = [ThiS sulfur-carrier protein]-C-terminal Gly-Gly + 2-[(2R,5Z)-2-carboxy-4-methylthiazol-5(2H)-ylidene]ethyl phosphate + 2 H2O + H(+). It functions in the pathway cofactor biosynthesis; thiamine diphosphate biosynthesis. Functionally, catalyzes the rearrangement of 1-deoxy-D-xylulose 5-phosphate (DXP) to produce the thiazole phosphate moiety of thiamine. Sulfur is provided by the thiocarboxylate moiety of the carrier protein ThiS. In vitro, sulfur can be provided by H(2)S. The polypeptide is Thiazole synthase (Stutzerimonas stutzeri (strain A1501) (Pseudomonas stutzeri)).